The chain runs to 576 residues: Arginine--tRNA ligase (576 aa).

Residues 126 to 136 (ANPTGPMHIGH) carry the 'HIGH' region motif.

This sequence belongs to the class-I aminoacyl-tRNA synthetase family. In terms of assembly, monomer.

The protein resides in the cytoplasm. It carries out the reaction tRNA(Arg) + L-arginine + ATP = L-arginyl-tRNA(Arg) + AMP + diphosphate. In Rickettsia felis (strain ATCC VR-1525 / URRWXCal2) (Rickettsia azadi), this protein is Arginine--tRNA ligase.